The chain runs to 445 residues: MRPGSWRVITHYGFTGPIQRLQAPLRRSLARAAALSTRSYATIPSAPSSQPTSQESSPAASASASASAPATKPRPTYFKDTTLASLDDFIANQSSAAPLAPSEAYTLRTAQVGPAGKKRTITRLPEWLKTPIPSAGANPEFAKIKADLRGLNLHTVCEEARCPNIGECWGGSNKAAATATIMLMGDTCTRGCRFCSVKTSRKPPPLDPHEPENTAEALARWGLGYVVLTSVDRDDLADGGARHFAETIRRIKQKKPTLLVEALTGDFMGDLDMVKIVADSGLDVYAHNVETVENLTPYVRDRRATFRQSLKVLEHVKNVRGKEGIITKTSIMLGLGETEEELWDALRELRKVDVDVVTFGQYMRPTKRHLAVEKYITPDEFELWRQRALDMGFLYCASGPLVRSSYKAGEAFIENVLKKRASERVVSEALGQAVAAEEATSAKSA.

The transit peptide at 1 to 40 directs the protein to the mitochondrion; that stretch reads MRPGSWRVITHYGFTGPIQRLQAPLRRSLARAAALSTRSY. Residues 42-71 show a composition bias toward low complexity; sequence TIPSAPSSQPTSQESSPAASASASASAPAT. The interval 42-77 is disordered; that stretch reads TIPSAPSSQPTSQESSPAASASASASAPATKPRPTY. Positions 157, 162, 168, 188, 192, 195, and 405 each coordinate [4Fe-4S] cluster. Residues 171–394 enclose the Radical SAM core domain; sequence GSNKAAATAT…RQRALDMGFL (224 aa).

It belongs to the radical SAM superfamily. Lipoyl synthase family. Requires [4Fe-4S] cluster as cofactor.

The protein resides in the mitochondrion. It carries out the reaction [[Fe-S] cluster scaffold protein carrying a second [4Fe-4S](2+) cluster] + N(6)-octanoyl-L-lysyl-[protein] + 2 oxidized [2Fe-2S]-[ferredoxin] + 2 S-adenosyl-L-methionine + 4 H(+) = [[Fe-S] cluster scaffold protein] + N(6)-[(R)-dihydrolipoyl]-L-lysyl-[protein] + 4 Fe(3+) + 2 hydrogen sulfide + 2 5'-deoxyadenosine + 2 L-methionine + 2 reduced [2Fe-2S]-[ferredoxin]. Its pathway is protein modification; protein lipoylation via endogenous pathway; protein N(6)-(lipoyl)lysine from octanoyl-[acyl-carrier-protein]: step 2/2. In terms of biological role, catalyzes the radical-mediated insertion of two sulfur atoms into the C-6 and C-8 positions of the octanoyl moiety bound to the lipoyl domains of lipoate-dependent enzymes, thereby converting the octanoylated domains into lipoylated derivatives. The chain is Lipoyl synthase, mitochondrial from Sordaria macrospora (strain ATCC MYA-333 / DSM 997 / K(L3346) / K-hell).